The sequence spans 164 residues: T-cell surface glycoprotein CD3 zeta chain (164 aa).

The N-terminal stretch at 1-21 (MKWKVSVLACILHVRFPGAEA) is a signal peptide. Residue Gln-22 is modified to Blocked amino end (Gln). Topologically, residues 22-30 (QSFGLLDPK) are extracellular. The chain crosses the membrane as a helical span at residues 31–51 (LCYLLDGILFIYGVIITALYL). Topologically, residues 52 to 164 (RAKFSRSAET…ALHMQTLAPR (113 aa)) are cytoplasmic. At Ser-58 the chain carries Phosphoserine. 3 consecutive ITAM domains span residues 61–89 (TAAN…LEKK), 100–128 (QQRR…EIGT), and 131–159 (ERRR…LHMQ). Residues Tyr-72 and Tyr-83 each carry the phosphotyrosine modification. Positions 87–96 (EKKRARDPEM) are enriched in basic and acidic residues. The interval 87-111 (EKKRARDPEMGGKQQRRRNPQEGVY) is disordered. A phosphotyrosine mark is found at Tyr-111, Tyr-123, Tyr-142, and Tyr-153. The segment at 124–143 (SEIGTKGERRRGKGHDGLYQ) is disordered.

Belongs to the CD3Z/FCER1G family. As to quaternary structure, the TCR-CD3 complex is composed of a CD3D/CD3E and a CD3G/CD3E heterodimers that preferentially associate with TCRalpha and TCRbeta, respectively, to form TCRalpha/CD3E/CD3G and TCRbeta/CD3G/CD3E trimers. In turn, the hexamer interacts with CD3Z homodimer to form the TCR-CD3 complex. Alternatively, TCRalpha and TCRbeta can be replaced by TCRgamma and TCRdelta. Interacts with SLA. Interacts with SLA2. Interacts with TRAT1. Interacts with DOCK2. Interacts with SHB. Interacts with ZAP70. Interacts (tyrosine phosphorylated) with SHC1 (via SH2 domain). Interacts with PTPRC. Interacts with CRK; this interaction regulates CD3Z phosphorylation. Interacts (on T cell side) with CD81, ICAM1 and CD9 at immunological synapses between antigen-presenting cells and T cells. Interacts with CD160. Interacts with LY6E. Interacts with LY6E. The signaling subunit of immunoglobulin gamma (IgG) Fc receptor complex. As a homodimer or a heterodimer with FCER1G, associates with the ligand binding subunit FCGR3A (via transmembrane domain); this interaction is a prerequisite for Fc receptor complex expression on the cell surface. Interacts with CD5. In terms of processing, phosphorylated on Tyr residues after T-cell receptor triggering by LCK in association with CD4/CD8. In terms of tissue distribution, CD3Z is expressed in normal lymphoid tissue and in peripheral blood mononuclear cells (PBMCs). Expressed also in retinal ganglion cells.

The protein localises to the cell membrane. Its function is as follows. Part of the TCR-CD3 complex present on T-lymphocyte cell surface that plays an essential role in adaptive immune response. When antigen presenting cells (APCs) activate T-cell receptor (TCR), TCR-mediated signals are transmitted across the cell membrane by the CD3 chains CD3D, CD3E, CD3G and CD3Z. All CD3 chains contain immunoreceptor tyrosine-based activation motifs (ITAMs) in their cytoplasmic domain. Upon TCR engagement, these motifs become phosphorylated by Src family protein tyrosine kinases LCK and FYN, resulting in the activation of downstream signaling pathways. CD3Z ITAMs phosphorylation creates multiple docking sites for the protein kinase ZAP70 leading to ZAP70 phosphorylation and its conversion into a catalytically active enzyme. Plays an important role in intrathymic T-cell differentiation. Additionally, participates in the activity-dependent synapse formation of retinal ganglion cells (RGCs) in both the retina and dorsal lateral geniculate nucleus (dLGN). The sequence is that of T-cell surface glycoprotein CD3 zeta chain (Cd247) from Mus musculus (Mouse).